Here is a 201-residue protein sequence, read N- to C-terminus: LexA repressor 1 (201 aa).

A DNA-binding region (H-T-H motif) is located at residues 27–47; that stretch reads LAEIAQAFGFASRNAAQKHVQ. Catalysis depends on for autocatalytic cleavage activity residues S122 and K159.

It belongs to the peptidase S24 family. In terms of assembly, homodimer.

The catalysed reaction is Hydrolysis of Ala-|-Gly bond in repressor LexA.. Its function is as follows. Represses a number of genes involved in the response to DNA damage (SOS response), including recA and lexA. In the presence of single-stranded DNA, RecA interacts with LexA causing an autocatalytic cleavage which disrupts the DNA-binding part of LexA, leading to derepression of the SOS regulon and eventually DNA repair. This Xanthomonas oryzae pv. oryzae (strain KACC10331 / KXO85) protein is LexA repressor 1.